A 205-amino-acid chain; its full sequence is Holliday junction branch migration complex subunit RuvA (205 aa).

The segment at 1-64 (MIGRLRGVLV…EDAQLLYGFI (64 aa)) is domain I. Residues 65–143 (TKQERALFRL…SLMEASAGSE (79 aa)) are domain II. Positions 144 to 156 (REFVLQSNYSPAP) are flexible linker. The domain III stretch occupies residues 157–205 (TVNSAEEDAISALISLGYKPPQASKSVSAAYKEGMDSETLIKAALKSML).

Belongs to the RuvA family. As to quaternary structure, homotetramer. Forms an RuvA(8)-RuvB(12)-Holliday junction (HJ) complex. HJ DNA is sandwiched between 2 RuvA tetramers; dsDNA enters through RuvA and exits via RuvB. An RuvB hexamer assembles on each DNA strand where it exits the tetramer. Each RuvB hexamer is contacted by two RuvA subunits (via domain III) on 2 adjacent RuvB subunits; this complex drives branch migration. In the full resolvosome a probable DNA-RuvA(4)-RuvB(12)-RuvC(2) complex forms which resolves the HJ.

The protein resides in the cytoplasm. Its function is as follows. The RuvA-RuvB-RuvC complex processes Holliday junction (HJ) DNA during genetic recombination and DNA repair, while the RuvA-RuvB complex plays an important role in the rescue of blocked DNA replication forks via replication fork reversal (RFR). RuvA specifically binds to HJ cruciform DNA, conferring on it an open structure. The RuvB hexamer acts as an ATP-dependent pump, pulling dsDNA into and through the RuvAB complex. HJ branch migration allows RuvC to scan DNA until it finds its consensus sequence, where it cleaves and resolves the cruciform DNA. The protein is Holliday junction branch migration complex subunit RuvA of Shewanella baltica (strain OS223).